A 2110-amino-acid polypeptide reads, in one-letter code: Tenascin (2110 aa).

Positions 1–22 are cleaved as a signal peptide; that stretch reads MGAVTWLLPGIFLALFALTPEG. An N-linked (GlcNAc...) asparagine glycan is attached at asparagine 38. A phosphoserine mark is found at serine 65, serine 70, and serine 72. A disordered region spans residues 69–91; sequence ESASGEKDLTPTPESSGSFQEHT. Residue serine 72 is glycosylated (O-linked (Xyl...) (chondroitin sulfate) serine). Residues 80–89 are compositionally biased toward polar residues; sequence TPESSGSFQE. Residues 118–142 adopt a coiled-coil conformation; it reads DVKELLSRLEELELLVSSLREQCTM. N-linked (GlcNAc...) asparagine glycans are attached at residues asparagine 166 and asparagine 184. The EGF-like 1; incomplete domain maps to 174 to 185; that stretch reads CVCEPGWKGPNC. 14 consecutive EGF-like domains span residues 186–216, 217–247, 248–279, 280–310, 311–341, 342–372, 373–403, 404–434, 435–465, 466–496, 497–527, 528–558, 559–589, and 590–621; these read SEPD…GEDC, SQLA…GPDC, GLEV…GEDC, NEPL…GEDC, SELI…GEDC, GELT…GADC, SEKR…GADC, GDLQ…GEDC, SQRR…GFDC, SEMS…GEDC, RDRR…GPDC, AELS…GKDC, KEQR…GLDC, and GQRS…IDCS. 42 cysteine pairs are disulfide-bonded: cysteine 190-cysteine 200, cysteine 194-cysteine 205, cysteine 207-cysteine 216, cysteine 221-cysteine 231, cysteine 225-cysteine 236, cysteine 238-cysteine 247, cysteine 252-cysteine 263, cysteine 256-cysteine 268, cysteine 270-cysteine 279, cysteine 284-cysteine 294, cysteine 288-cysteine 299, cysteine 301-cysteine 310, cysteine 315-cysteine 325, cysteine 319-cysteine 330, cysteine 332-cysteine 341, cysteine 346-cysteine 356, cysteine 350-cysteine 361, cysteine 363-cysteine 372, cysteine 377-cysteine 387, cysteine 381-cysteine 392, cysteine 394-cysteine 403, cysteine 408-cysteine 418, cysteine 412-cysteine 423, cysteine 425-cysteine 434, cysteine 439-cysteine 449, cysteine 443-cysteine 454, cysteine 456-cysteine 465, cysteine 470-cysteine 480, cysteine 474-cysteine 485, cysteine 487-cysteine 496, cysteine 501-cysteine 511, cysteine 505-cysteine 516, cysteine 518-cysteine 527, cysteine 532-cysteine 542, cysteine 536-cysteine 547, cysteine 549-cysteine 558, cysteine 563-cysteine 573, cysteine 567-cysteine 578, cysteine 580-cysteine 589, cysteine 594-cysteine 604, cysteine 598-cysteine 609, and cysteine 611-cysteine 620. Asparagine 327 is a glycosylation site (N-linked (GlcNAc...) asparagine). Fibronectin type-III domains lie at 625–715, 716–804, 805–894, 895–988, 989–1077, 1078–1165, 1167–1259, 1260–1348, 1349–1440, 1442–1530, 1531–1620, 1621–1710, 1711–1797, and 1798–1886; these read PPKD…LPAP, EGLK…TRLD, APSH…TGLD, APRN…IDAP, KDLR…VPSL, ENLT…TGTT, NLGE…LPQL, GGLS…AREP, EIGN…ALPL, ENLT…EAEP, EVDN…TAMG, SPKE…ALDG, PSGL…TDLD, and SPRE…IGLL. An N-linked (GlcNAc...) asparagine glycan is attached at asparagine 788. Threonine 905 bears the Phosphothreonine mark. Residues asparagine 1018, asparagine 1079, asparagine 1093, asparagine 1119, asparagine 1184, asparagine 1210, asparagine 1275, asparagine 1301, asparagine 1354, asparagine 1364, asparagine 1394, and asparagine 1443 are each glycosylated (N-linked (GlcNAc...) asparagine). Residue asparagine 1718 is glycosylated (N-linked (GlcNAc...) asparagine). A Fibrinogen C-terminal domain is found at 1884 to 2099; it reads GLLYPFPRDC…FAEMKLRPSN (216 aa). Asparagine 1969 and asparagine 2071 each carry an N-linked (GlcNAc...) asparagine glycan.

This sequence belongs to the tenascin family. As to quaternary structure, homohexamer; disulfide-linked. A homotrimer may be formed in the triple coiled-coil region and may be stabilized by disulfide rings at both ends. Two of such half-hexabrachions may be disulfide linked within the central globule. Interacts with CSPG4. Interacts (via the 3rd fibronectin type-III domain) with integrin ITGA9:ITGB1. In terms of processing, N-glycosylated. In terms of tissue distribution, expressed in the corneal limbus, the periosteum and the rib molecular layer of the cerebellum, the matrix of kidney tubules, blood vessels, stomach and intestine (at protein level). Weakly expressed in the brain. As to expression, highly expressed in the thymus and moderately expressed in the brain.

The protein resides in the secreted. The protein localises to the extracellular space. It is found in the extracellular matrix. Functionally, extracellular matrix protein implicated in guidance of migrating neurons as well as axons during development, synaptic plasticity as well as neuronal regeneration. Promotes neurite outgrowth when provided to neurons in culture. May play a role in supporting the growth of epithelial tumors. Ligand for integrins ITGA8:ITGB1, ITGA9:ITGB1, ITGAV:ITGB3 and ITGAV:ITGB6. In tumors, stimulates angiogenesis by elongation, migration and sprouting of endothelial cells. The polypeptide is Tenascin (Mus musculus (Mouse)).